The primary structure comprises 167 residues: Putative lipoprotein YteS (167 aa).

The N-terminal stretch at 1–20 (MTKRIRTALCVIVSVLFLAS) is a signal peptide. The N-palmitoyl cysteine moiety is linked to residue cysteine 21. Residue cysteine 21 is the site of S-diacylglycerol cysteine attachment.

It is found in the cell membrane. Its function is as follows. May play a role in the degradation of type I rhamnogalacturonan derived from plant cell walls. The protein is Putative lipoprotein YteS (yteS) of Bacillus subtilis (strain 168).